The chain runs to 322 residues: uncharacterized protein (322 aa).

This is an uncharacterized protein from Acanthamoeba polyphaga (Amoeba).